We begin with the raw amino-acid sequence, 170 residues long: Ribosome maturation factor RimP (170 aa).

This sequence belongs to the RimP family.

It is found in the cytoplasm. In terms of biological role, required for maturation of 30S ribosomal subunits. In Acidothermus cellulolyticus (strain ATCC 43068 / DSM 8971 / 11B), this protein is Ribosome maturation factor RimP.